A 270-amino-acid chain; its full sequence is Cytosolic Fe-S cluster assembly factor NUBP2 homolog (270 aa).

21–28 is an ATP binding site; the sequence is GKGGVGKS. Positions 195 and 198 each coordinate [4Fe-4S] cluster.

This sequence belongs to the Mrp/NBP35 ATP-binding proteins family. NUBP2/CFD1 subfamily. As to quaternary structure, heterotetramer of 2 NUBP1 and 2 NUBP2 chains. The cofactor is [4Fe-4S] cluster.

Its subcellular location is the cytoplasm. Its function is as follows. Component of the cytosolic iron-sulfur (Fe/S) protein assembly (CIA) machinery. Required for maturation of extramitochondrial Fe-S proteins. The NUBP1-NUBP2 heterotetramer forms a Fe-S scaffold complex, mediating the de novo assembly of an Fe-S cluster and its transfer to target apoproteins. This chain is Cytosolic Fe-S cluster assembly factor NUBP2 homolog, found in Nematostella vectensis (Starlet sea anemone).